The following is a 216-amino-acid chain: Uracil phosphoribosyltransferase (216 aa).

5-phospho-alpha-D-ribose 1-diphosphate contacts are provided by residues R85, R110, and 136-144; that span reads DPMLATGNS. Residues I201 and 206 to 208 contribute to the uracil site; that span reads GDA. D207 is a 5-phospho-alpha-D-ribose 1-diphosphate binding site.

It belongs to the UPRTase family. Mg(2+) serves as cofactor.

It catalyses the reaction UMP + diphosphate = 5-phospho-alpha-D-ribose 1-diphosphate + uracil. Its pathway is pyrimidine metabolism; UMP biosynthesis via salvage pathway; UMP from uracil: step 1/1. Allosterically activated by GTP. Its function is as follows. Catalyzes the conversion of uracil and 5-phospho-alpha-D-ribose 1-diphosphate (PRPP) to UMP and diphosphate. The polypeptide is Uracil phosphoribosyltransferase (Rhodospirillum centenum (strain ATCC 51521 / SW)).